The primary structure comprises 187 residues: Orotate phosphoribosyltransferase (187 aa).

5-phospho-alpha-D-ribose 1-diphosphate contacts are provided by residues R103, K104, K107, and E129–S137. 2 residues coordinate orotate: T133 and R161.

It belongs to the purine/pyrimidine phosphoribosyltransferase family. PyrE subfamily. As to quaternary structure, homodimer. Mg(2+) serves as cofactor.

It catalyses the reaction orotidine 5'-phosphate + diphosphate = orotate + 5-phospho-alpha-D-ribose 1-diphosphate. It functions in the pathway pyrimidine metabolism; UMP biosynthesis via de novo pathway; UMP from orotate: step 1/2. Functionally, catalyzes the transfer of a ribosyl phosphate group from 5-phosphoribose 1-diphosphate to orotate, leading to the formation of orotidine monophosphate (OMP). The polypeptide is Orotate phosphoribosyltransferase (Methanosarcina mazei (strain ATCC BAA-159 / DSM 3647 / Goe1 / Go1 / JCM 11833 / OCM 88) (Methanosarcina frisia)).